Here is a 258-residue protein sequence, read N- to C-terminus: Thiazole synthase (258 aa).

The active-site Schiff-base intermediate with DXP is K97. 1-deoxy-D-xylulose 5-phosphate is bound by residues G158, 184 to 185, and 206 to 207; these read AG and NT.

This sequence belongs to the ThiG family. Homotetramer. Forms heterodimers with either ThiH or ThiS.

It localises to the cytoplasm. The enzyme catalyses [ThiS sulfur-carrier protein]-C-terminal-Gly-aminoethanethioate + 2-iminoacetate + 1-deoxy-D-xylulose 5-phosphate = [ThiS sulfur-carrier protein]-C-terminal Gly-Gly + 2-[(2R,5Z)-2-carboxy-4-methylthiazol-5(2H)-ylidene]ethyl phosphate + 2 H2O + H(+). The protein operates within cofactor biosynthesis; thiamine diphosphate biosynthesis. Its function is as follows. Catalyzes the rearrangement of 1-deoxy-D-xylulose 5-phosphate (DXP) to produce the thiazole phosphate moiety of thiamine. Sulfur is provided by the thiocarboxylate moiety of the carrier protein ThiS. In vitro, sulfur can be provided by H(2)S. This is Thiazole synthase from Marinomonas sp. (strain MWYL1).